A 354-amino-acid polypeptide reads, in one-letter code: Protein-glutamate methylesterase/protein-glutamine glutaminase (354 aa).

One can recognise a Response regulatory domain in the interval 7–124 (KVLCVDDSAL…REGMLEYTEM (118 aa)). Position 58 is a 4-aspartylphosphate (Asp58). Positions 156–348 (LLSSEKVIII…AALMKRAEAS (193 aa)) constitute a CheB-type methylesterase domain. Active-site residues include Ser168, His194, and Asp290.

Belongs to the CheB family. Post-translationally, phosphorylated by CheA. Phosphorylation of the N-terminal regulatory domain activates the methylesterase activity.

Its subcellular location is the cytoplasm. The catalysed reaction is [protein]-L-glutamate 5-O-methyl ester + H2O = L-glutamyl-[protein] + methanol + H(+). It catalyses the reaction L-glutaminyl-[protein] + H2O = L-glutamyl-[protein] + NH4(+). Involved in chemotaxis. Part of a chemotaxis signal transduction system that modulates chemotaxis in response to various stimuli. Catalyzes the demethylation of specific methylglutamate residues introduced into the chemoreceptors (methyl-accepting chemotaxis proteins or MCP) by CheR. Also mediates the irreversible deamidation of specific glutamine residues to glutamic acid. This chain is Protein-glutamate methylesterase/protein-glutamine glutaminase, found in Chromohalobacter salexigens (strain ATCC BAA-138 / DSM 3043 / CIP 106854 / NCIMB 13768 / 1H11).